The primary structure comprises 296 residues: tRNA dimethylallyltransferase (296 aa).

Residue 2–9 participates in ATP binding; it reads GPTASGKT. Substrate is bound at residue 4–9; it reads TASGKT. Interaction with substrate tRNA regions lie at residues 27–30, 151–155, and 232–237; these read DSAL, QRLSR, and RCVGYR.

This sequence belongs to the IPP transferase family. As to quaternary structure, monomer. Mg(2+) serves as cofactor.

It catalyses the reaction adenosine(37) in tRNA + dimethylallyl diphosphate = N(6)-dimethylallyladenosine(37) in tRNA + diphosphate. Functionally, catalyzes the transfer of a dimethylallyl group onto the adenine at position 37 in tRNAs that read codons beginning with uridine, leading to the formation of N6-(dimethylallyl)adenosine (i(6)A). The protein is tRNA dimethylallyltransferase of Shewanella frigidimarina (strain NCIMB 400).